Consider the following 154-residue polypeptide: Ribonuclease H (154 aa).

Positions 3–144 (ELPVVSIFTD…ADQLARDGVA (142 aa)) constitute an RNase H type-1 domain. 4 residues coordinate Mg(2+): D12, E50, D72, and D136.

Belongs to the RNase H family. Monomer. Requires Mg(2+) as cofactor.

It localises to the cytoplasm. It catalyses the reaction Endonucleolytic cleavage to 5'-phosphomonoester.. Functionally, endonuclease that specifically degrades the RNA of RNA-DNA hybrids. The chain is Ribonuclease H from Bradyrhizobium sp. (strain ORS 278).